We begin with the raw amino-acid sequence, 807 residues long: Glycerol-3-phosphate acyltransferase (807 aa).

Positions 308–313 (CHRSHM) match the HXXXXD motif motif.

This sequence belongs to the GPAT/DAPAT family.

The protein localises to the cell inner membrane. It catalyses the reaction sn-glycerol 3-phosphate + an acyl-CoA = a 1-acyl-sn-glycero-3-phosphate + CoA. It participates in phospholipid metabolism; CDP-diacylglycerol biosynthesis; CDP-diacylglycerol from sn-glycerol 3-phosphate: step 1/3. In Shewanella sp. (strain MR-4), this protein is Glycerol-3-phosphate acyltransferase.